The primary structure comprises 325 residues: tRNA dimethylallyltransferase (325 aa).

12-19 provides a ligand contact to ATP; that stretch reads GPTASGKT. Position 14 to 19 (14 to 19) interacts with substrate; sequence TASGKT. Interaction with substrate tRNA regions lie at residues 37 to 40, 161 to 165, and 244 to 249; these read DSAL, QRIHR, and RCVGYR.

This sequence belongs to the IPP transferase family. In terms of assembly, monomer. Requires Mg(2+) as cofactor.

It catalyses the reaction adenosine(37) in tRNA + dimethylallyl diphosphate = N(6)-dimethylallyladenosine(37) in tRNA + diphosphate. Its function is as follows. Catalyzes the transfer of a dimethylallyl group onto the adenine at position 37 in tRNAs that read codons beginning with uridine, leading to the formation of N6-(dimethylallyl)adenosine (i(6)A). This Chromobacterium violaceum (strain ATCC 12472 / DSM 30191 / JCM 1249 / CCUG 213 / NBRC 12614 / NCIMB 9131 / NCTC 9757 / MK) protein is tRNA dimethylallyltransferase.